The sequence spans 336 residues: MSKINLLLLCGGGSAEHDISLLSANYFETSLAKSEQFNVLRVVLDKFGQYQTAAGDDCELTNNREIRFRDESKAPWPVDYVIPCIHGYPGETGDIQSYFNLIQLPYFGCESEASSNCFNKITAKMWFSALGIPNTPYIFLNQYDDEAIAQTQAALEKWGSIFVKAASQGSSVGCYKVDEASKVLGVLKDAFGYAPYVIVEKTIKARELEVAVYEYQGEVIATLPGEIICDSNTFYTFDEKYAKSSKARTDVVAQNVPTDISDQIRAYAIKAFKGMKLRHLSRIDFFLTADNEILLNEINTFPGSTPISMFPKMLQNHGHDFTQYLSLVINSQLAAK.

The ATP-grasp domain maps to 124-330 (KMWFSALGIP…FTQYLSLVIN (207 aa)). 154-209 (ALEKWGSIFVKAASQGSSVGCYKVDEASKVLGVLKDAFGYAPYVIVEKTIKARELE) is an ATP binding site. Mg(2+)-binding residues include Asp284, Glu297, and Asn299.

This sequence belongs to the D-alanine--D-alanine ligase family. It depends on Mg(2+) as a cofactor. Requires Mn(2+) as cofactor.

It localises to the cytoplasm. The enzyme catalyses 2 D-alanine + ATP = D-alanyl-D-alanine + ADP + phosphate + H(+). It functions in the pathway cell wall biogenesis; peptidoglycan biosynthesis. In terms of biological role, cell wall formation. The protein is D-alanine--D-alanine ligase of Shewanella oneidensis (strain ATCC 700550 / JCM 31522 / CIP 106686 / LMG 19005 / NCIMB 14063 / MR-1).